Here is a 614-residue protein sequence, read N- to C-terminus: GPI transamidase component GAA1 (614 aa).

Residues 1–19 (MALLEKLHRRIVDMGLVPR) are Cytoplasmic-facing. A helical membrane pass occupies residues 20–40 (IIALLPVISMLCALFGFISIA). At 41 to 356 (ILPMDGQYRR…APRQFVSISS (316 aa)) the chain is on the lumenal side. A glycan (N-linked (GlcNAc...) asparagine) is linked at N87. The helical transmembrane segment at 357 to 377 (YLPSAVALSIAFAISSLNAFI) threads the bilayer. Topologically, residues 378 to 394 (NNAYANISLFSEYNLVA) are cytoplasmic. Residues 395–415 (LLVWFVSLVISFVVSQAFLLI) form a helical membrane-spanning segment. Topologically, residues 416-464 (PSSGLLMTISMASCFLPLILSRKIHISEPLSYRLKNVAFLYFSLVSTSL) are lumenal. The chain crosses the membrane as a helical span at residues 465–485 (LMINFAMALLIGTLAFPMTFV). Residues 486 to 535 (KTIVESSSEHEVTTQSSNPIKTEPKDEIELVENHMDTTPATPQQQKQKLK) are Cytoplasmic-facing. A helical membrane pass occupies residues 536-556 (NLVLLILTNPFISITLFGLFF). Over 557–577 (DDEFHGFDIINKLVSAWLDLK) the chain is Lumenal. The helical transmembrane segment at 578-598 (CWSWFVLCIGWLPCWLLILAS) threads the bilayer. The Cytoplasmic segment spans residues 599 to 614 (SFESKSVVVRSKEKQS). The Prevents secretion from ER signature appears at 610–614 (KEKQS).

Forms a complex with CDC91, GPI17, GPI16 and GPI8.

It is found in the endoplasmic reticulum membrane. It participates in glycolipid biosynthesis; glycosylphosphatidylinositol-anchor biosynthesis. In terms of biological role, component of the GPI transamidase complex. Required for a terminal step of GPI anchor attachment onto proteins. Affects endocytosis. This is GPI transamidase component GAA1 (GAA1) from Saccharomyces cerevisiae (strain ATCC 204508 / S288c) (Baker's yeast).